Reading from the N-terminus, the 199-residue chain is MIKLIVGLGNPGAEYTATRHNAGFWLIDQLAREAGATLRDERRFHGFYAKARLYGEEVHLLEPQTYMNRSGQSVVALAHFFKILPDQILVAHDELDLPPGTVKLKLGGGSGGHNGLKDISAHLSSQQYWRLRIGIGHPRDLIPESARAGAKPDVANFVLKPPRREEQDVIDAAIERALAVMPMVVKGELDRATMQLHRN.

Y15 lines the tRNA pocket. Catalysis depends on H20, which acts as the Proton acceptor. Positions 66, 68, and 114 each coordinate tRNA.

It belongs to the PTH family. Monomer.

The protein resides in the cytoplasm. The enzyme catalyses an N-acyl-L-alpha-aminoacyl-tRNA + H2O = an N-acyl-L-amino acid + a tRNA + H(+). Its function is as follows. Hydrolyzes ribosome-free peptidyl-tRNAs (with 1 or more amino acids incorporated), which drop off the ribosome during protein synthesis, or as a result of ribosome stalling. Catalyzes the release of premature peptidyl moieties from peptidyl-tRNA molecules trapped in stalled 50S ribosomal subunits, and thus maintains levels of free tRNAs and 50S ribosomes. This is Peptidyl-tRNA hydrolase from Burkholderia multivorans (strain ATCC 17616 / 249).